The following is a 489-amino-acid chain: Lysine--tRNA ligase (489 aa).

The Mg(2+) site is built by Glu-399 and Glu-406.

It belongs to the class-II aminoacyl-tRNA synthetase family. In terms of assembly, homodimer. Mg(2+) serves as cofactor.

Its subcellular location is the cytoplasm. It carries out the reaction tRNA(Lys) + L-lysine + ATP = L-lysyl-tRNA(Lys) + AMP + diphosphate. The polypeptide is Lysine--tRNA ligase (Malacoplasma penetrans (strain HF-2) (Mycoplasma penetrans)).